We begin with the raw amino-acid sequence, 214 residues long: Nicotinamidase (214 aa).

The active-site Proton acceptor is the D18. A divalent metal cation contacts are provided by D56, H58, H62, and H91. The active site involves K116. The active-site Nucleophile is the C161.

It belongs to the isochorismatase family. Requires a divalent metal cation as cofactor.

It carries out the reaction nicotinamide + H2O = nicotinate + NH4(+). Its pathway is cofactor biosynthesis; nicotinate biosynthesis; nicotinate from nicotinamide: step 1/1. Its function is as follows. Catalyzes the deamidation of nicotinamide (NAM) into nicotinate (Na). Functions in the deamidating salvage pathway for production of NAD from nicotinamide. The sequence is that of Nicotinamidase from Acinetobacter baylyi (strain ATCC 33305 / BD413 / ADP1).